A 152-amino-acid chain; its full sequence is Nucleoside diphosphate kinase A (152 aa).

ATP is bound by residues lysine 12, phenylalanine 60, arginine 88, and threonine 94. Lysine 100 participates in a covalent cross-link: Glycyl lysine isopeptide (Lys-Gly) (interchain with G-Cter in ubiquitin). Arginine 105 and asparagine 115 together coordinate ATP. Histidine 118 acts as the Pros-phosphohistidine intermediate in catalysis. A phosphoserine mark is found at serine 120, serine 122, and serine 125.

Belongs to the NDK family. Hexamer of two different chains: An and B (A6, A5B, A4B2, A3B3, A2B4, AB5, B6). Interacts with PRUNE1. Component of the SET complex, composed of at least ANP32A, APEX1, HMGB2, NME1, SET and TREX1. Within this complex, interacts directly with SET. Also interacts with TREX1, but only following translocation to the nucleus. Mg(2+) is required as a cofactor. In terms of tissue distribution, isoform 1 is expressed in heart, brain, placenta, lung, liver, skeletal muscle, pancreas, spleen and thymus. Expressed in lung carcinoma cell lines but not in normal lung tissues. Isoform 2 is ubiquitously expressed and its expression is also related to tumor differentiation.

The protein resides in the cytoplasm. It localises to the nucleus. It catalyses the reaction a 2'-deoxyribonucleoside 5'-diphosphate + ATP = a 2'-deoxyribonucleoside 5'-triphosphate + ADP. The catalysed reaction is a ribonucleoside 5'-diphosphate + ATP = a ribonucleoside 5'-triphosphate + ADP. Its activity is regulated as follows. Autophosphorylation at His-118 increases serine/threonine protein kinase activity of the enzyme. Interaction with the SET complex inhibits the endonuclease activity. Its function is as follows. Major role in the synthesis of nucleoside triphosphates other than ATP. The ATP gamma phosphate is transferred to the NDP beta phosphate via a ping-pong mechanism, using a phosphorylated active-site intermediate. Possesses nucleoside-diphosphate kinase, serine/threonine-specific protein kinase, geranyl and farnesyl pyrophosphate kinase, histidine protein kinase and 3'-5' exonuclease activities. Involved in cell proliferation, differentiation and development, signal transduction, G protein-coupled receptor endocytosis, and gene expression. Required for neural development including neural patterning and cell fate determination. During GZMA-mediated cell death, works in concert with TREX1. NME1 nicks one strand of DNA and TREX1 removes bases from the free 3' end to enhance DNA damage and prevent DNA end reannealing and rapid repair. In Homo sapiens (Human), this protein is Nucleoside diphosphate kinase A (NME1).